A 583-amino-acid chain; its full sequence is Pentatricopeptide repeat-containing protein At3g59040 (583 aa).

10 PPR repeats span residues 138–172 (SEID…GSTP), 173–207 (NVIS…GPEP), 208–242 (SAIT…KKSP), 246–280 (DQKM…GVPQ), 281–312 (STVT…DIQP), 313–347 (DVVS…GVRP), 348–382 (THKA…RIFP), 383–417 (DLWS…GFEP), 418–452 (NIVT…GIKA), and 453–487 (NQTI…GVPP). A disordered region spans residues 525–583 (VYGSDDDEEGVEDISSESSDDEDEGDDDDDDARETVLYDKPQEGSLGYGSLQTEELVGL). The segment covering 528 to 556 (SDDDEEGVEDISSESSDDEDEGDDDDDDA) has biased composition (acidic residues). Residues 557–566 (RETVLYDKPQ) are compositionally biased toward basic and acidic residues.

Belongs to the PPR family. P subfamily.

This is Pentatricopeptide repeat-containing protein At3g59040 from Arabidopsis thaliana (Mouse-ear cress).